We begin with the raw amino-acid sequence, 198 residues long: Recombination protein RecR (198 aa).

The segment at 58 to 73 adopts a C4-type zinc-finger fold; the sequence is CSVCGNYTDTDPCAIC. Positions 81–175 constitute a Toprim domain; that stretch reads SLVCVVEEPK…KVTRIAHGIP (95 aa).

Belongs to the RecR family.

Its function is as follows. May play a role in DNA repair. It seems to be involved in an RecBC-independent recombinational process of DNA repair. It may act with RecF and RecO. This Clostridium acetobutylicum (strain ATCC 824 / DSM 792 / JCM 1419 / IAM 19013 / LMG 5710 / NBRC 13948 / NRRL B-527 / VKM B-1787 / 2291 / W) protein is Recombination protein RecR.